Consider the following 723-residue polypeptide: MAAAATMAAAARELVLRAGTSDMEEEEGPLAGGPGLQEPLQLGELDITSDEFILDEVDVHIQANLEDELVKEALKTGVDLRHYSKQVELELQQIEQKSIRDYIQESENIASLHNQITACDAVLERMEQMLGAFQSDLSSISSEIRTLQEQSGAMNIRLRNRQAVRGKLGELVDGLVVPSALVTAILEAPVTEPRFLEQLQELDAKAAAVREQEARGTAACADVRGVLDRLRVKAVTKIREFILQKIYSFRKPMTNYQIPQTALLKYRFFYQFLLGNERATAKEIRDEYVETLSKIYLSYYRSYLGRLMKVQYEEVAEKDDLMGVEDTAKKGFFSKPSLRSRNTIFTLGTRGSVISPTELEAPILVPHTAQRGEQRYPFEALFRSQHYALLDNSCREYLFICEFFVVSGPAAHDLFHAVMGRTLSMTLKHLDSYLADCYDAIAVFLCIHIVLRFRNIAAKRDVPALDRYWEQVLALLWPRFELILEMNVQSVRSTDPQRLGGLDTRPHYITRRYAEFSSALVSINQTIPNERTMQLLGQLQVEVENFVLRVAAEFSSRKEQLVFLINNYDMMLGVLMERAADDSKEVESFQQLLNARTQEFIEELLSPPFGGLVAFVKEAEALIERGQAERLRGEEARVTQLIRGFGSSWKSSVESLSQDVMRSFTNFRNGTSIIQGALTQLIQLYHRFHRVLSQPQLRALPARAELINIHHLMVELKKHKPNF.

Ala-2 is subject to N-acetylalanine. Coiled coils occupy residues 107 to 127 and 194 to 215; these read ENIA…ERME and RFLE…QEAR. Ser-355 is modified (phosphoserine).

It belongs to the VPS52 family. As to quaternary structure, component of the Golgi-associated retrograde protein (GARP) complex, also called VFT (VPS fifty-three) complex, composed of VPS51, VPS52, VPS53 and VPS54. Component of the endosome-associated retrograde protein (EARP) complex, composed of VPS51, VPS52, VPS53 and VPS50/Syndetin. EIPR1 interacts with both EARP and GARP complexes and mediates the recruitment of the GARP complex to the trans-Golgi network. Interacts with RAB6A and STX10. Interacts with BLTP3B.

It localises to the golgi apparatus. Its subcellular location is the trans-Golgi network membrane. The protein localises to the endosome membrane. It is found in the recycling endosome. Acts as a component of the GARP complex that is involved in retrograde transport from early and late endosomes to the trans-Golgi network (TGN). The GARP complex is required for the maintenance of the cycling of mannose 6-phosphate receptors between the TGN and endosomes, this cycling is necessary for proper lysosomal sorting of acid hydrolases such as CTSD. Acts as a component of the EARP complex that is involved in endocytic recycling. The EARP complex associates with Rab4-positive endosomes and promotes recycling of internalized transferrin receptor (TFRC) to the plasma membrane. In Homo sapiens (Human), this protein is Vacuolar protein sorting-associated protein 52 homolog (VPS52).